A 473-amino-acid polypeptide reads, in one-letter code: H(+)/Cl(-) exchange transporter ClcA (473 aa).

Topologically, residues 1 to 32 are cytoplasmic; that stretch reads MKTDTSTFLAQQIVRLRRRDQIRRLMQRDKTP. A helical membrane pass occupies residues 33–69; that stretch reads LAILFMAAVVGTLTGLVGVAFEKTVSWVQNMRIGALV. The Periplasmic segment spans residues 70–76; sequence QVADHAF. The chain crosses the membrane as a helical span at residues 77–100; sequence LLWPLAFILSALLAMVGYFLVRKF. Residues 106-110 carry the Selectivity filter part_1 motif; it reads GSGIP. Serine 107 is a chloride binding site. Residues 109 to 116 constitute an intramembrane region (helical); the sequence is IPEIEGAL. The Cytoplasmic segment spans residues 117 to 123; it reads EELRPVR. 2 helical membrane passes run 124–141 and 148–166; these read WWRV…TLGA and EGPT…LDVF. The Selectivity filter part_2 motif lies at 146–150; sequence GREGP. The Cytoplasmic portion of the chain corresponds to 167 to 176; the sequence is RMRSAEARHT. 2 intramembrane regions (helical) span residues 177–189 and 193–201; these read LLAT…LSAA and PLAGILFII. Topologically, residues 202-214 are cytoplasmic; sequence EEMRPQFRYNLIS. Residues 215 to 232 traverse the membrane as a helical segment; sequence IKAVFTGVIMSSIVFRIF. The Periplasmic segment spans residues 233-252; the sequence is NGEAPIIEVGKLSDAPVNTL. A helical membrane pass occupies residues 253–281; that stretch reads WLYLILGIIFGCVGPVFNSLVLRTQDMFQ. Topologically, residues 282-287 are cytoplasmic; it reads RFHGGE. Residues 288 to 309 traverse the membrane as a helical segment; sequence IKKWVLMGGAIGGLCGILGLIE. Over 310–329 the chain is Periplasmic; that stretch reads PAAAGGGFNLIPIAAAGNFS. 2 helical membrane passes run 330 to 349 and 355 to 376; these read VGLL…LCFS and GIFA…MAAA. The Selectivity filter part_3 signature appears at 355 to 359; it reads GIFAP. Chloride-binding residues include isoleucine 356 and phenylalanine 357. The Periplasmic portion of the chain corresponds to 377–386; the sequence is VLFPQYHLEA. An intramembrane region (helical) is located at residues 387-401; it reads GTFAIAGMGALMAAS. Positions 402 to 404 form an intramembrane region, note=Loop between two helices; that stretch reads VRA. Positions 405-416 form an intramembrane region, helical; it reads PLTGIVLVLEMT. Residues 417 to 421 constitute an intramembrane region (note=Loop between two helices); sequence DNYQL. A helical transmembrane segment spans residues 422 to 438; sequence ILPMIITCLGATLLAQF. The Cytoplasmic portion of the chain corresponds to 439 to 473; it reads LGGKPLYSTILARTLAKQDAEQAAKNQNAPAGENT. Chloride is bound at residue tyrosine 445.

This sequence belongs to the chloride channel (TC 2.A.49) family. ClcA subfamily. As to quaternary structure, homodimer.

It is found in the cell inner membrane. The catalysed reaction is 2 chloride(in) + H(+)(out) = 2 chloride(out) + H(+)(in). In terms of biological role, proton-coupled chloride transporter. Functions as antiport system and exchanges two chloride ions for 1 proton. Probably acts as an electrical shunt for an outwardly-directed proton pump that is linked to amino acid decarboxylation, as part of the extreme acid resistance (XAR) response. This is H(+)/Cl(-) exchange transporter ClcA from Salmonella typhi.